The primary structure comprises 740 residues: D-ornithine 4,5-aminomutase subunit beta (740 aa).

Residues Glu-81, Tyr-160, His-182, and 294 to 296 (RAQ) each bind substrate. The B12-binding domain maps to 602–739 (PLKIVAATVG…VKKRREMREG (138 aa)). Adenosylcob(III)alamin contacts are provided by residues 614–616 (EHS) and His-615. The residue at position 626 (Lys-626) is an N6-(pyridoxal phosphate)lysine. Adenosylcob(III)alamin is bound by residues 664 to 669 (STIISH), Thr-700, and Ser-720.

As to quaternary structure, heterotetramer of 2 alpha (OraS) and 2 beta (OraE) subunits. Requires adenosylcob(III)alamin as cofactor. Pyridoxal 5'-phosphate serves as cofactor.

It carries out the reaction D-ornithine = (2R,4S)-2,4-diaminopentanoate. Its activity is regulated as follows. Increased activity in the presence of dithiothreitol (DTT) in vitro. Inhibited by 1 mM potassium phosphate and potassium chloride. Inhibited by L-alpha-ornithine, D,L-alpha-lysine, L-beta-lysine (50%-60%), L-alpha-lysine (26%) and by delta-amino-n-valeric acid to a lesser extent. Significant decrease in activity is observed in the presence of 0.2 mM p-chloromercuribenzoate, N-ethylmaleimide and also by 2 mM iodoacetate to a lesser extent but not inhibited by arsenite. In terms of biological role, component of a complex that catalyzes the reversible migration of the omega amino group of D-ornithine to C-4 to form (2R,4S)-2,4-diaminopentanoic acid. OraE may be the catalytic subunit. Active only on D-ornithine and 2,4-diaminopentanoic acid but not active on L-ornithine, L-beta-lysine, L-alpha-lysine or D-alpha-lysine. The polypeptide is D-ornithine 4,5-aminomutase subunit beta (oraE) (Acetoanaerobium sticklandii (strain ATCC 12662 / DSM 519 / JCM 1433 / CCUG 9281 / NCIMB 10654 / HF) (Clostridium sticklandii)).